We begin with the raw amino-acid sequence, 1382 residues long: DNA-directed RNA polymerase subunit beta'' (1382 aa).

Zn(2+) is bound by residues Cys224, Cys294, Cys301, and Cys304.

This sequence belongs to the RNA polymerase beta' chain family. RpoC2 subfamily. As to quaternary structure, in plastids the minimal PEP RNA polymerase catalytic core is composed of four subunits: alpha, beta, beta', and beta''. When a (nuclear-encoded) sigma factor is associated with the core the holoenzyme is formed, which can initiate transcription. Zn(2+) serves as cofactor.

The protein localises to the plastid. It localises to the chloroplast. It carries out the reaction RNA(n) + a ribonucleoside 5'-triphosphate = RNA(n+1) + diphosphate. Functionally, DNA-dependent RNA polymerase catalyzes the transcription of DNA into RNA using the four ribonucleoside triphosphates as substrates. The protein is DNA-directed RNA polymerase subunit beta'' of Dioscorea elephantipes (Elephant's foot yam).